Consider the following 361-residue polypeptide: Histidinol-phosphate aminotransferase (361 aa).

Position 219 is an N6-(pyridoxal phosphate)lysine (K219).

Belongs to the class-II pyridoxal-phosphate-dependent aminotransferase family. Histidinol-phosphate aminotransferase subfamily. As to quaternary structure, homodimer. Pyridoxal 5'-phosphate serves as cofactor.

The enzyme catalyses L-histidinol phosphate + 2-oxoglutarate = 3-(imidazol-4-yl)-2-oxopropyl phosphate + L-glutamate. It participates in amino-acid biosynthesis; L-histidine biosynthesis; L-histidine from 5-phospho-alpha-D-ribose 1-diphosphate: step 7/9. In Acinetobacter baumannii (strain ATCC 17978 / DSM 105126 / CIP 53.77 / LMG 1025 / NCDC KC755 / 5377), this protein is Histidinol-phosphate aminotransferase.